The following is a 505-amino-acid chain: MRQQQEADVVALGRKPGLLCVPERFRAMDLPMAAADALFLWAETPTRPLHVGALAVLSQPDNGTGRYLRKVFSAAVARQQVAPWWRRRPHRSLTSLGQWSWRTETEVDLDYHVRLSALPPRAGTAELWALVSELHAGMLDRSRPLWQVDLIEGLPGGRCAVYVKVHHALADGVSVMRLLQRIVTADPHQRQMPTLWEVPAQASVAKHTAPRGSSRPLTLAKGVLGQARGVPGMVRVVADTTWRAAQCRSGPLTLAAPHTPLNEPIAGARSVAGCSFPIERLRQVAEHADATINDVVLAMCGGALRAYLISRGALPGAPLIAMVPVSLRDTAVIDVFGQGPGNKIGTLMCSLATHLASPVERLSAIRASMRDGKAAIAGRSRNQALAMSALGAAPLALAMALGRVPAPLRPPNVTISNVPGPQGALYWNGARLDALYLLSAPVDGAALNITCSGTNEQITFGLTGCRRAVPALSILTDQLAHELELLVGVSEAGPGTRLRRIAGRR.

His-167 acts as the Proton acceptor in catalysis.

The protein belongs to the long-chain O-acyltransferase family.

The enzyme catalyses an acyl-CoA + a 1,2-diacyl-sn-glycerol = a triacyl-sn-glycerol + CoA. It functions in the pathway glycerolipid metabolism; triacylglycerol biosynthesis. This is Putative diacyglycerol O-acyltransferase MT0919 from Mycobacterium tuberculosis (strain CDC 1551 / Oshkosh).